Here is a 1078-residue protein sequence, read N- to C-terminus: DNA gyrase subunit B (1078 aa).

Residues 889 to 974 form the Toprim domain; the sequence is GKILNIEKTD…QGYIYIACPP (86 aa). Mg(2+)-binding residues include Glu-895, Asp-939, and Asp-941.

Belongs to the type II topoisomerase GyrB family. In terms of assembly, heterotetramer, composed of two GyrA and two GyrB chains. In the heterotetramer, GyrA contains the active site tyrosine that forms a transient covalent intermediate with DNA, while GyrB binds cofactors and catalyzes ATP hydrolysis. Mg(2+) serves as cofactor. This protein undergoes a protein self splicing that involves a post-translational excision of the intervening region (intein) followed by peptide ligation.

The protein resides in the cytoplasm. It carries out the reaction ATP-dependent breakage, passage and rejoining of double-stranded DNA.. In terms of biological role, a type II topoisomerase that negatively supercoils closed circular double-stranded (ds) DNA in an ATP-dependent manner to modulate DNA topology and maintain chromosomes in an underwound state. Negative supercoiling favors strand separation, and DNA replication, transcription, recombination and repair, all of which involve strand separation. Also able to catalyze the interconversion of other topological isomers of dsDNA rings, including catenanes and knotted rings. Type II topoisomerases break and join 2 DNA strands simultaneously in an ATP-dependent manner. In Synechocystis sp. (strain ATCC 27184 / PCC 6803 / Kazusa), this protein is DNA gyrase subunit B (gyrB).